Consider the following 97-residue polypeptide: Citrate lyase acyl carrier protein (97 aa).

S14 is subject to O-(phosphoribosyl dephospho-coenzyme A)serine.

The protein belongs to the CitD family. Oligomer with a subunit composition of (alpha,beta,gamma)6.

Its subcellular location is the cytoplasm. Its function is as follows. Covalent carrier of the coenzyme of citrate lyase. The polypeptide is Citrate lyase acyl carrier protein (Cronobacter sakazakii (strain ATCC BAA-894) (Enterobacter sakazakii)).